The sequence spans 388 residues: MSKTTSSDDSRDGEGDKRLRSTTKSTWLSFLKSIATFSGDLSSLTAPSFILSSTSLIEYSAYWAEHPELFISLPRGETPLERQLLVTKWFASTLKNQYAARNERYGSEKKPLNPILGELFTGKWNTDIGEDTELTSEQVSHHPPITAYHIYNKKAGVRLEGYNGHKSGFSGPQIHVKQIGHARLILEPHNEVYYITFPLVTLEGLWYGSPYIELGKKSYIISTSGYLTTIEYSGKGYFTGKKNTFKATIVNAKTKSEPIYRIEGSWTGMLKYCTFEDQKRSAWEDFLDCGNYKPVNISVAPIEEQGEYESRRVWKNFAVALDAGDYAAASQEKSKIEEGQRELRRQEEEHNEVWHRKYFEWKDKDEGFEEATKCLRQPVKEGFWYYLR.

It belongs to the OSBP family.

Functionally, lipid transporter involved in lipid countertransport between the Golgi complex and membranes of the endoplasmic reticulum: specifically exchanges sterol with phosphatidylinositol 4-phosphate (PI4P), delivering sterol to the Golgi in exchange for PI4P, which is degraded by the SAC1 phosphatase in the endoplasmic reticulum. This chain is Protein kes1 (kes1), found in Schizosaccharomyces pombe (strain 972 / ATCC 24843) (Fission yeast).